Consider the following 935-residue polypeptide: MNMKKKEKHAIRKKSIGVASVLVGTLIGFGLLSSKEADASENSVTQSDSASNESKSNDSSSVSAAPKTDDTNVSDTKTSSNTNNGETSVAQNPAQQETTQSSSTNATTEETPVTGEATTTTTNQANTPATTQSSNTNAEELVNQTSNETTSNDTNTVSSVNSPQNSTNAENVSTTQDTSTEATPSNNESAPQNTDASNKDVVSQAVNPSTPRMRAFSLAAVAADAPAAGTDITNQLTDVKVTIDSGTTVYPHQAGYVKLNYGFSVPNSAVKGDTFKITVPKELNLNGVTSTAKVPPIMAGDQVLANGVIDSDGNVIYTFTDYVDNKENVTANITMPAYIDPENVTKTGNVTLTTGIGTNTASKTVLIDYEKYGQFHNLSIKGTIDQIDKTNNTYRQTIYVNPSGDNVVLPALTGNLIPNTKSNALIDAKNTDIKVYRVDNANDLSESYYVNPSDFEDVTNQVRISFPNANQYKVEFPTDDDQITTPYIVVVNGHIDPASTGDLALRSTFYGYDSNFIWRSMSWDNEVAFNNGSGSGDGIDKPVVPEQPDEPGEIEPIPEDSDSDPGSDSGSDSNSDSGSDSGSDSTSDSGSDSASDSDSASDSDSASDSDSASDSDSASDSDSASDSDSASDSDSASDSDSASDSDSASDSDSASDSDSASDSDSASDSDSDSDSDSDSDSDSDSDSDSDSDSDSDSDSDSDSDSDSDSDSDSDSDSDSDSDSDSDSDSDSDSDSDSDSDSDSDSDSDSDSDSDSDSDSDSDSDSDSASDSDSDSDSESDSDSDSDSDSDSDSDSDSDSDSESDSDSDSDSDSESDSDSDSDSDSDSASDSDSGSDSDSSSDSDSDSTSDTGSDNDSDSDSNSDSESGSNNNVVPPNSPKNGTNASNKNEAKDSKEPLPDTGSEDEANTSLIWGLLASLGSLLLFRRKKENKDKK.

An N-terminal signal peptide occupies residues 1–39 (MNMKKKEKHAIRKKSIGVASVLVGTLIGFGLLSSKEADA). The YSIRK-G/S signaling motif signature appears at 9-20 (HAIRKKSIGVAS). Disordered regions lie at residues 34–205 (SKEA…VSQA) and 529–906 (FNNG…SEDE). A ligand binding A region region spans residues 40–542 (SENSVTQSDS…SGSGDGIDKP (503 aa)). Low complexity predominate over residues 47-65 (SDSASNESKSNDSSSVSAA). Polar residues predominate over residues 71-105 (TNVSDTKTSSNTNNGETSVAQNPAQQETTQSSSTN). Low complexity-rich tracts occupy residues 106–132 (ATTEETPVTGEATTTTTNQANTPATTQ) and 143–162 (NQTSNETTSNDTNTVSSVNS). Residues 163–205 (PQNSTNAENVSTTQDTSTEATPSNNESAPQNTDASNKDVVSQA) are compositionally biased toward polar residues. Acidic residues predominate over residues 547–565 (QPDEPGEIEPIPEDSDSDP). Over residues 566–598 (GSDSGSDSNSDSGSDSGSDSTSDSGSDSASDSD) the composition is skewed to low complexity. The span at 599–863 (SASDSDSASD…DNDSDSDSNS (265 aa)) shows a compositional bias: acidic residues. The segment covering 864–882 (DSESGSNNNVVPPNSPKNG) has biased composition (low complexity). Positions 889-898 (NEAKDSKEPL) are enriched in basic and acidic residues. Positions 898-902 (LPDTG) match the LPXTG sorting signal motif. Pentaglycyl murein peptidoglycan amidated threonine is present on threonine 901. Residues 902–935 (GSEDEANTSLIWGLLASLGSLLLFRRKKENKDKK) constitute a propeptide, removed by sortase.

This sequence belongs to the serine-aspartate repeat-containing protein (SDr) family.

It localises to the secreted. Its subcellular location is the cell wall. Functionally, cell surface-associated protein implicated in virulence. Promotes bacterial attachment exclusively to the gamma-chain of human fibrinogen. Induces formation of bacterial clumps. This chain is Clumping factor A (clfA), found in Staphylococcus aureus (strain Mu50 / ATCC 700699).